A 551-amino-acid polypeptide reads, in one-letter code: MESLLRQLSICNELIAQGPACPVGNIAWLNEFCATFLDFASELKAHLPEIAPRWGAPEGGNNIEVETIFLCLTQVVTCITQLERTINIESKFGHETTPMTRLHFLDRIDWCVRRIYVSLSQLDLHQESGAADNLEDHTFVELMDLALDHLEAFMEGLGNTTSNFLYIEEENDTNDACQLGSIINHIVRHALAFANVALEADKKALSELCETLLSECTTFLEGSAELNPGHRKLEALSLERALYGLETFLNEALLHSIFASLVELENTPINRLRHALQEQESESGLTEKLVSDFDTNMDRIQQIGVLAIAFSQDVKTKTIVRSCLASLESLDACIVPALQSSALHHADILEHHFNDEMLIFRNLIHDIIDSRSLVNNYLDMLAESLHIHIAGKSVPREYLLIVQMGSVLAEHFRLPVNYSALSDDGKRVHKDLILILRECLAAVSLATPVDPKRIVKRLKILYSVLAKLRDVIDKNVHDSVFNLSSRRQITNATRTLLRSCKSKSKRQRSYVKQSQDSVVPDPHNYTSSIANSISNDGDLISFQLTEILRIN.

It localises to the cytoplasm. Its subcellular location is the cell membrane. Functionally, required for the cellularization of the syncytial blastoderm embryo. Involved in the localization of the actin filaments just prior to and during plasma membrane invagination. Sry-alpha together with nullo and bnk may provide auxiliary functions, by acting both to stabilize a large and dynamic microfilament structure and regulate its functions. This is Serendipity locus protein alpha (Sry-alpha) from Drosophila pseudoobscura pseudoobscura (Fruit fly).